A 241-amino-acid polypeptide reads, in one-letter code: Small ribosomal subunit protein uS2 (241 aa).

Belongs to the universal ribosomal protein uS2 family.

In Escherichia coli (strain 55989 / EAEC), this protein is Small ribosomal subunit protein uS2.